Consider the following 429-residue polypeptide: 3-phosphoshikimate 1-carboxyvinyltransferase (429 aa).

3-phosphoshikimate-binding residues include Lys23, Ser24, and Arg28. Lys23 provides a ligand contact to phosphoenolpyruvate. Phosphoenolpyruvate contacts are provided by Gly97 and Arg125. 3-phosphoshikimate contacts are provided by Ser170, Ser171, Gln172, Ser198, Asp314, Asn338, and Lys342. Residue Gln172 participates in phosphoenolpyruvate binding. Asp314 serves as the catalytic Proton acceptor. The phosphoenolpyruvate site is built by Arg346, Arg388, and Lys413.

The protein belongs to the EPSP synthase family. Monomer.

Its subcellular location is the cytoplasm. The catalysed reaction is 3-phosphoshikimate + phosphoenolpyruvate = 5-O-(1-carboxyvinyl)-3-phosphoshikimate + phosphate. The protein operates within metabolic intermediate biosynthesis; chorismate biosynthesis; chorismate from D-erythrose 4-phosphate and phosphoenolpyruvate: step 6/7. In terms of biological role, catalyzes the transfer of the enolpyruvyl moiety of phosphoenolpyruvate (PEP) to the 5-hydroxyl of shikimate-3-phosphate (S3P) to produce enolpyruvyl shikimate-3-phosphate and inorganic phosphate. This chain is 3-phosphoshikimate 1-carboxyvinyltransferase, found in Pectobacterium carotovorum subsp. carotovorum (strain PC1).